Here is a 177-residue protein sequence, read N- to C-terminus: Putative thioredoxin peroxidase (177 aa).

The 158-residue stretch at 1–158 (MFPKTLTDSK…IIRLIDAITF (158 aa)) folds into the Thioredoxin domain. The active-site Cysteine sulfenic acid (-SOH) intermediate is cysteine 45.

It belongs to the peroxiredoxin family. AhpC/Prx1 subfamily. Homodimer; disulfide-linked, upon oxidation.

It catalyses the reaction a hydroperoxide + [thioredoxin]-dithiol = an alcohol + [thioredoxin]-disulfide + H2O. Functionally, thiol-specific peroxidase that catalyzes the reduction of hydrogen peroxide and organic hydroperoxides to water and alcohols, respectively. Plays a role in cell protection against oxidative stress by detoxifying peroxides and as sensor of hydrogen peroxide-mediated signaling events. This Encephalitozoon cuniculi (strain GB-M1) (Microsporidian parasite) protein is Putative thioredoxin peroxidase.